Reading from the N-terminus, the 325-residue chain is Malate dehydrogenase (325 aa).

11-17 (GAAGQIA) is an NAD(+) binding site. Positions 92 and 98 each coordinate substrate. Residues N105, Q112, and 129-131 (VGN) contribute to the NAD(+) site. Residues N131 and R162 each coordinate substrate. Catalysis depends on H187, which acts as the Proton acceptor.

The protein belongs to the LDH/MDH superfamily. MDH type 2 family.

It carries out the reaction (S)-malate + NAD(+) = oxaloacetate + NADH + H(+). Catalyzes the reversible oxidation of malate to oxaloacetate. This chain is Malate dehydrogenase, found in Methylococcus capsulatus (strain ATCC 33009 / NCIMB 11132 / Bath).